A 476-amino-acid polypeptide reads, in one-letter code: Aspartyl/glutamyl-tRNA(Asn/Gln) amidotransferase subunit B (476 aa).

The protein belongs to the GatB/GatE family. GatB subfamily. As to quaternary structure, heterotrimer of A, B and C subunits.

It catalyses the reaction L-glutamyl-tRNA(Gln) + L-glutamine + ATP + H2O = L-glutaminyl-tRNA(Gln) + L-glutamate + ADP + phosphate + H(+). The catalysed reaction is L-aspartyl-tRNA(Asn) + L-glutamine + ATP + H2O = L-asparaginyl-tRNA(Asn) + L-glutamate + ADP + phosphate + 2 H(+). Allows the formation of correctly charged Asn-tRNA(Asn) or Gln-tRNA(Gln) through the transamidation of misacylated Asp-tRNA(Asn) or Glu-tRNA(Gln) in organisms which lack either or both of asparaginyl-tRNA or glutaminyl-tRNA synthetases. The reaction takes place in the presence of glutamine and ATP through an activated phospho-Asp-tRNA(Asn) or phospho-Glu-tRNA(Gln). The protein is Aspartyl/glutamyl-tRNA(Asn/Gln) amidotransferase subunit B of Neisseria meningitidis serogroup A / serotype 4A (strain DSM 15465 / Z2491).